The sequence spans 260 residues: 3-alpha-(or 20-beta)-hydroxysteroid dehydrogenase (260 aa).

Arg-17, Met-19, Asp-38, Asp-61, Val-62, Asn-88, Tyr-153, Lys-157, Val-186, Thr-188, and Thr-191 together coordinate NAD(+). Tyr-153 acts as the Proton acceptor in catalysis.

The protein belongs to the short-chain dehydrogenases/reductases (SDR) family. Homotetramer.

It carries out the reaction androstan-3alpha,17beta-diol + NAD(+) = 17beta-hydroxyandrostanone + NADH + H(+). It participates in lipid metabolism; steroid degradation. Its function is as follows. Probably involved in steroid metabolism. In Mycobacterium bovis (strain ATCC BAA-935 / AF2122/97), this protein is 3-alpha-(or 20-beta)-hydroxysteroid dehydrogenase (fabG3).